Here is a 441-residue protein sequence, read N- to C-terminus: Ubiquitin carboxyl-terminal hydrolase MINDY-3 (441 aa).

The Nucleophile role is filled by cysteine 51. Histidine 284 acts as the Proton acceptor in catalysis.

This sequence belongs to the MINDY deubiquitinase family. FAM188 subfamily.

The protein localises to the nucleus. It carries out the reaction Thiol-dependent hydrolysis of ester, thioester, amide, peptide and isopeptide bonds formed by the C-terminal Gly of ubiquitin (a 76-residue protein attached to proteins as an intracellular targeting signal).. Hydrolase that can remove 'Lys-48'-linked conjugated ubiquitin from proteins. The chain is Ubiquitin carboxyl-terminal hydrolase MINDY-3 (mindy3) from Xenopus tropicalis (Western clawed frog).